A 75-amino-acid polypeptide reads, in one-letter code: uncharacterized protein (75 aa).

This is an uncharacterized protein from Escherichia coli O6:H1 (strain CFT073 / ATCC 700928 / UPEC).